Reading from the N-terminus, the 493-residue chain is Alginate production protein AlgE (493 aa).

A signal peptide spans 1-25; it reads MKLNPLMAAGMGLGFTLFWACPTLA. A compositionally biased stretch (polar residues) spans 93-111; that stretch reads DPLEQSNSDGSGTQTSRGT. The segment at 93-115 is disordered; that stretch reads DPLEQSNSDGSGTQTSRGTASER.

It belongs to the AlgE family.

The protein localises to the cell outer membrane. It functions in the pathway glycan biosynthesis; alginate biosynthesis. In terms of biological role, has non-porin-like, channel-forming properties and probably functions as an alginate permeability pore. The polypeptide is Alginate production protein AlgE (algE) (Pseudomonas syringae pv. tomato (strain ATCC BAA-871 / DC3000)).